The chain runs to 483 residues: Glutamyl-tRNA(Gln) amidotransferase subunit A (483 aa).

Residues Lys-77 and Ser-152 each act as charge relay system in the active site. Ser-176 serves as the catalytic Acyl-ester intermediate.

The protein belongs to the amidase family. GatA subfamily. Heterotrimer of A, B and C subunits.

The catalysed reaction is L-glutamyl-tRNA(Gln) + L-glutamine + ATP + H2O = L-glutaminyl-tRNA(Gln) + L-glutamate + ADP + phosphate + H(+). Its function is as follows. Allows the formation of correctly charged Gln-tRNA(Gln) through the transamidation of misacylated Glu-tRNA(Gln) in organisms which lack glutaminyl-tRNA synthetase. The reaction takes place in the presence of glutamine and ATP through an activated gamma-phospho-Glu-tRNA(Gln). In Listeria monocytogenes serotype 4a (strain HCC23), this protein is Glutamyl-tRNA(Gln) amidotransferase subunit A.